The following is a 449-amino-acid chain: Glutathione reductase (449 aa).

FAD contacts are provided by Ser15, Gly16, Glu35, Thr42, Cys43, and Lys51. Glutathione is bound at residue Ser15. Cys43 and Cys48 are oxidised to a cystine. Tyr99 serves as a coordination point for glutathione. Ala115 lines the FAD pocket. The NADP(+) site is built by Gly175, Ile178, Glu181, Arg198, Arg204, and Gly261. Positions 302 and 310 each coordinate FAD. Ala340 is a binding site for NADP(+). His435 contacts FAD. The active-site Proton acceptor is the His435.

This sequence belongs to the class-I pyridine nucleotide-disulfide oxidoreductase family. In terms of assembly, homodimer. The cofactor is FAD.

The protein localises to the cytoplasm. The catalysed reaction is 2 glutathione + NADP(+) = glutathione disulfide + NADPH + H(+). Its pathway is xenobiotic degradation; (2,4,5-trichlorophenoxy)acetate degradation. In terms of biological role, catalyzes the reduction of glutathione disulfide (GSSG) to reduced glutathione (GSH). Constitutes the major mechanism to maintain a high GSH:GSSG ratio in the cytosol. The protein is Glutathione reductase (gor) of Burkholderia cepacia (Pseudomonas cepacia).